Here is a 349-residue protein sequence, read N- to C-terminus: Achromobactin transport system permease protein CbrC (349 aa).

10 consecutive transmembrane segments (helical) span residues Leu32–Leu52, Val82–Ile102, Ile111–Ala131, Leu138–Trp158, Val168–Phe188, Pro190–Trp210, Leu216–Val236, Val263–Ala283, Leu290–Val310, and Asp325–Ile345.

The protein belongs to the binding-protein-dependent transport system permease family. FecCD subfamily.

The protein localises to the cell inner membrane. In terms of biological role, part of the binding-protein-dependent transport system CbrABCD for uptake of the siderophore achromobactin. Probably responsible for the translocation of the substrate across the membrane. In Dickeya dadantii (strain 3937) (Erwinia chrysanthemi (strain 3937)), this protein is Achromobactin transport system permease protein CbrC (cbrC).